Reading from the N-terminus, the 491-residue chain is Glutamyl-tRNA(Gln) amidotransferase subunit A (491 aa).

Residues Lys-79 and Ser-154 each act as charge relay system in the active site. Ser-178 functions as the Acyl-ester intermediate in the catalytic mechanism.

The protein belongs to the amidase family. GatA subfamily. As to quaternary structure, heterotrimer of A, B and C subunits.

It carries out the reaction L-glutamyl-tRNA(Gln) + L-glutamine + ATP + H2O = L-glutaminyl-tRNA(Gln) + L-glutamate + ADP + phosphate + H(+). In terms of biological role, allows the formation of correctly charged Gln-tRNA(Gln) through the transamidation of misacylated Glu-tRNA(Gln) in organisms which lack glutaminyl-tRNA synthetase. The reaction takes place in the presence of glutamine and ATP through an activated gamma-phospho-Glu-tRNA(Gln). This Synechococcus sp. (strain CC9605) protein is Glutamyl-tRNA(Gln) amidotransferase subunit A.